The following is a 1769-amino-acid chain: MSSLSDQLAQVASNNATVALDRKRRQKLHSASLIYNSKTAATQDYDFIFENASKALEELSQIEPKFAIFSRTLFSESSISLDRNVQTKEEIKDLDNAINAYLLLASSKWYLAPTLHATEWLVRRFQIHVKNTEMLLLSTLNYYQTPVFKRILSIIKLPPLFNCLSNFVRSEKPPTALTMIKLFNDMDFLKLYTSYLDQCIKHNATYTNQLLFTTCCFINVVAFNSNNDEKLNQLVPILLEISAKLLASKSKDCQIAAHTILVVFATALPLKKTIILAAMETILSNLDAKEAKHSALLTICKLFQTLKGQGNVDQLPSKIFKLFDSKFDTVSILTFLDKEDKPVCDKFITSYTRSIARYDRSKLNIILSLLKKIRLERYEVRLIITDLIYLSEILEDKSQLVELFEYFISINEDLVLKCLKSLGLTGELFEIRLTTSLFTNADVNTDIVKQLSDPVETTKKDTASFQTFLDKHSELINTTNVSMLTETGERYKKVLSLFTEAIGKGYKASSFLTSFFTTLESRITFLLRVTISPAAPTALKLISLNNIAKYINSIEKEVNIFTLVPCLICALRDASIKVRTGVKKILSLIAKRPSTKHYFLSDKLYGENVTIPMLNPKDSEAWLSGFLNEYVTENYDISRILTPKRNEKVFLMFWANQALLIPSPYAKTVLLDNLNKSPTYASSYSSLFEEFISHYLENRSSWEKSCIANKTNFEHFERSLVNLVSPKEKQSFMIDFVLSALNSDYEQLANIAAERLISIFASLNNAQKLKIVQNIVDSSSNVESSYDTVGVLQSLPLDSDIFVSILNQNSISNEMDQTDFSKRRRRRSSTSKNAFLKEEVSQLAELHLRKLTIILEALDKVRNVGSEKLLFTLLSLLSDLETLDQDGGLPVLYAQETLISCTLNTITYLKEHGCTELTNVRADILVSAIRNSASPQVQNKLLLVIGSLATLSSEVILHSVMPIFTFMGAHSIRQDDEFTTKVVERTILTVVPALIKNSKGNEKEEMEFLLLSFTTALQHVPRHRRVKLFSTLIKTLDPVKALGSFLFLIAQQYSSALVNFKIGEARILIEFIKALLVDLHVNEELSGLNDLLDIIKLLTSSKSSSEKKKSLESRVLFSNGVLNFSESEFLTFMNNTFEFINKITEETDQDYYDVRRNLRLKVYSVLLDETSDKKLIRNIREEFGTLLEGVLFFINSVELTFSCITSQENEEASDSETSLSDHTTEIKEILFKVLGNVLQILPVDEFVNAVLPLLSTSTNEDIRYHLTLVIGSKFELEGSEAIPIVNNVMKVLLDRMPLESKSVVISQVILNTMTALVSKYGKKLEGSILTQALTLATEKVSSDMTEVKISSLALITNCVQVLGVKSIAFYPKIVPPSIKLFDASLADSSNPLKEQLQVAILLLFAGLIKRIPSFLMSNILDVLHVIYFSREVDSSIRLSVISLIIENIDLKEVLKVLFRIWSTEIATSNDTVAVSLFLSTLESTVENIDKKSATSQSPIFFKLLLSLFEFRSISSFDNNTISRIEASVHEISNSYVLKMNDKVFRPLFVILVRWAFDGEGVTNAGITETERLLAFFKFFNKLQENLRGIITSYFTYLLEPVDMLLKRFISKDMENVNLRRLVINSLTSSLKFDRDEYWKSTSRFELISVSLVNQLSNIENSIGKYLVKAIGALASNNSGVDEHNQILNKLIVEHMKASCSSNEKLWAIRAMKLIYSKIGESWLVLLPQLVPVIAELLEDDDEEIEREVRTGLVKVVENVLGEPFDRYLD.

An N-acetylserine modification is found at Ser-2. The stretch at 1729–1767 is one HEAT repeat; sequence LVPVIAELLEDDDEEIEREVRTGLVKVVENVLGEPFDRY.

It belongs to the HEATR1/UTP10 family. In terms of assembly, interacts with snoRNA U3. Interacts with MPP10. Component of the ribosomal small subunit (SSU) processome composed of at least 40 protein subunits and snoRNA U3. In the absence of snoRNA3, forms a complex with other t-UTPs. This complex can associate with pre-18S ribosomal RNAs.

It localises to the nucleus. It is found in the nucleolus. Its subcellular location is the mitochondrion. Involved in nucleolar processing of pre-18S ribosomal RNA. Required for optimal pre-ribosomal RNA transcription by RNA polymerase I together with a subset of U3 proteins required for transcription (t-UTPs). Involved in ribosome biosynthesis. The chain is U3 small nucleolar RNA-associated protein 10 (UTP10) from Saccharomyces cerevisiae (strain ATCC 204508 / S288c) (Baker's yeast).